We begin with the raw amino-acid sequence, 208 residues long: Large ribosomal subunit protein bL25 (208 aa).

Positions 188 to 208 are disordered; sequence AVETETEEETTTGESPAQPAE.

The protein belongs to the bacterial ribosomal protein bL25 family. CTC subfamily. As to quaternary structure, part of the 50S ribosomal subunit; part of the 5S rRNA/L5/L18/L25 subcomplex. Contacts the 5S rRNA. Binds to the 5S rRNA independently of L5 and L18.

Its function is as follows. This is one of the proteins that binds to the 5S RNA in the ribosome where it forms part of the central protuberance. This Moorella thermoacetica (strain ATCC 39073 / JCM 9320) protein is Large ribosomal subunit protein bL25.